We begin with the raw amino-acid sequence, 612 residues long: Indole-3-acetic acid-amido synthetase GH3.6 (612 aa).

It belongs to the IAA-amido conjugating enzyme family. In terms of tissue distribution, expressed in cotyledons, stipules, true leaves, hypocotyls, and all parts of the roots. Not detected in flowers.

In terms of biological role, catalyzes the synthesis of indole-3-acetic acid (IAA)-amino acid conjugates, providing a mechanism for the plant to cope with the presence of excess auxin. Strongly reactive with Glu, Gln, Trp, Asp, Ala, Leu, Phe, Gly, Tyr, Met, Ile and Val. Little or no product formation with His, Ser, Thr, Arg, Lys, or Cys. Also active on pyruvic and butyric acid analogs of IAA, PAA and the synthetic auxin naphthaleneacetic acid (NAA). The two chlorinated synthetic auxin herbicides 2,4-D and 3,6-dichloro-o-anisic acid (dicamba) cannot be used as substrates. Involved in auxin signal transduction. Inhibits shoot and hypocotyl cell elongation, and lateral root cell differentiation in light. The polypeptide is Indole-3-acetic acid-amido synthetase GH3.6 (GH3.6) (Arabidopsis thaliana (Mouse-ear cress)).